The primary structure comprises 190 residues: Small ribosomal subunit protein uS4 (190 aa).

The S4 RNA-binding domain occupies 105–181; the sequence is RRLQTLVYKL…RKKAKAAEGG (77 aa). The interval 163 to 190 is disordered; sequence GGGRPGRVRRKKAKAAEGGDGDAEEDEE. Over residues 181-190 the composition is skewed to acidic residues; sequence GDGDAEEDEE.

The protein belongs to the universal ribosomal protein uS4 family.

The protein is Small ribosomal subunit protein uS4 (RPS9) of Podospora anserina (Pleurage anserina).